A 420-amino-acid polypeptide reads, in one-letter code: Sodium/proton antiporter 2 (420 aa).

11 consecutive transmembrane segments (helical) span residues 25-45 (IALL…SVEI), 60-80 (IVFY…HQGF), 94-114 (ILLW…DNLT), 136-156 (LGAV…IGDV), 173-193 (IKNL…LMSL), 221-241 (LVFG…SLTG), 242-262 (LPPY…TDVI), 285-305 (GALF…AGIL), 321-341 (LIAS…LVAA), 363-383 (FCAG…VIFM), and 400-420 (FAFA…NFPL).

The protein belongs to the NhaD Na(+)/H(+) (TC 2.A.62) antiporter family.

It localises to the membrane. Functionally, na(+)/H(+) antiporter that extrudes sodium in exchange for external protons. This chain is Sodium/proton antiporter 2, found in Arabidopsis thaliana (Mouse-ear cress).